A 100-amino-acid chain; its full sequence is Small ribosomal subunit protein uS14c (100 aa).

This sequence belongs to the universal ribosomal protein uS14 family. In terms of assembly, part of the 30S ribosomal subunit.

The protein localises to the plastid. It localises to the chloroplast. Its function is as follows. Binds 16S rRNA, required for the assembly of 30S particles. This is Small ribosomal subunit protein uS14c from Chara vulgaris (Common stonewort).